Reading from the N-terminus, the 464-residue chain is ATP synthase subunit beta (464 aa).

153-160 (GGAGVGKT) contacts ATP.

Belongs to the ATPase alpha/beta chains family. F-type ATPases have 2 components, CF(1) - the catalytic core - and CF(0) - the membrane proton channel. CF(1) has five subunits: alpha(3), beta(3), gamma(1), delta(1), epsilon(1). CF(0) has three main subunits: a(1), b(2) and c(9-12). The alpha and beta chains form an alternating ring which encloses part of the gamma chain. CF(1) is attached to CF(0) by a central stalk formed by the gamma and epsilon chains, while a peripheral stalk is formed by the delta and b chains.

It is found in the cell inner membrane. It carries out the reaction ATP + H2O + 4 H(+)(in) = ADP + phosphate + 5 H(+)(out). Its function is as follows. Produces ATP from ADP in the presence of a proton gradient across the membrane. The catalytic sites are hosted primarily by the beta subunits. The polypeptide is ATP synthase subunit beta (Burkholderia ambifaria (strain ATCC BAA-244 / DSM 16087 / CCUG 44356 / LMG 19182 / AMMD) (Burkholderia cepacia (strain AMMD))).